Reading from the N-terminus, the 107-residue chain is Nucleoid-associated protein BLi00029/BL02358 (107 aa).

Residues 1 to 27 (MRGGMGNMQKMMKQMQKMQKDMQKAQE) form a disordered region. Residues 8 to 17 (MQKMMKQMQK) are compositionally biased toward low complexity. Residues 18–27 (MQKDMQKAQE) show a composition bias toward basic and acidic residues.

The protein belongs to the YbaB/EbfC family. As to quaternary structure, homodimer.

It localises to the cytoplasm. The protein resides in the nucleoid. In terms of biological role, binds to DNA and alters its conformation. May be involved in regulation of gene expression, nucleoid organization and DNA protection. The chain is Nucleoid-associated protein BLi00029/BL02358 from Bacillus licheniformis (strain ATCC 14580 / DSM 13 / JCM 2505 / CCUG 7422 / NBRC 12200 / NCIMB 9375 / NCTC 10341 / NRRL NRS-1264 / Gibson 46).